A 231-amino-acid polypeptide reads, in one-letter code: NKG2-C type II integral membrane protein (231 aa).

The segment covering 1–12 has biased composition (polar residues); sequence MNKQRGTFSEVS. The tract at residues 1–32 is disordered; that stretch reads MNKQRGTFSEVSLAQDPKRQQRKPKGNKSSIS. The Cytoplasmic portion of the chain corresponds to 1 to 70; it reads MNKQRGTFSE…CQGLLPPPEK (70 aa). The chain crosses the membrane as a helical; Signal-anchor for type II membrane protein span at residues 71-93; sequence LTAEVLGIICIVLMATVLKTIVL. Residues 94-231 are Extracellular-facing; it reads IPFLEQNNFS…SMIYHCKHKL (138 aa). A glycan (N-linked (GlcNAc...) asparagine) is linked at Asn-100. Residues 116–229 form the C-type lectin domain; the sequence is HCPEEWITYS…GSSMIYHCKH (114 aa). 3 disulfide bridges follow: Cys-117–Cys-128, Cys-145–Cys-227, and Cys-206–Cys-219. N-linked (GlcNAc...) asparagine glycosylation is found at Asn-149 and Asn-178.

In terms of assembly, heterodimer with KLRD1; disulfide-linked. KLRD1-KLRC2 receptor complex interacts with TYROBP homodimer; this interaction is necessary for the expression on the cell surface. KLRD1-KLRC2 receptor complex can bind with low affinity to HLA-E loaded with self-peptides derived from the signal sequence of classical MHC class Ia. As to expression, expressed in NK cell subsets, in particular in adaptive CD57-positive NK cells (at protein level). Expressed in terminally differentiated cytotoxic gamma-delta T cells (at protein level). Expressed in alpha-beta T cells subsets (at protein level). KLRD1-KLRC1 and KLRD1-KLRC2 are differentially expressed within NK and T cell populations, with only minor subsets expressing both receptor complexes (at protein level).

The protein resides in the cell membrane. Its function is as follows. Immune activating receptor involved in self-nonself discrimination. In complex with KLRD1 on cytotoxic lymphocyte subsets, recognizes non-classical major histocompatibility (MHC) class Ib HLA-E loaded with signal sequence-derived peptides from non-classical MHC class Ib HLA-G molecules, likely playing a role in the generation and effector functions of adaptive natural killer (NK) cells and in maternal-fetal tolerance during pregnancy. Regulates the effector functions of terminally differentiated cytotoxic lymphocyte subsets, and in particular may play a role in adaptive NK cell response to viral infection. Upon HLA-E-peptide binding, transmits intracellular signals via the adapter protein TYROBP/DAP12, triggering the phosphorylation of proximal signaling molecules and cell activation. The protein is NKG2-C type II integral membrane protein (KLRC2) of Homo sapiens (Human).